The sequence spans 506 residues: ATP synthase subunit alpha, chloroplastic (506 aa).

170–177 (GDRQTGKT) serves as a coordination point for ATP.

This sequence belongs to the ATPase alpha/beta chains family. In terms of assembly, F-type ATPases have 2 components, CF(1) - the catalytic core - and CF(0) - the membrane proton channel. CF(1) has five subunits: alpha(3), beta(3), gamma(1), delta(1), epsilon(1). CF(0) has four main subunits: a, b, b' and c.

The protein localises to the plastid. It is found in the chloroplast thylakoid membrane. The enzyme catalyses ATP + H2O + 4 H(+)(in) = ADP + phosphate + 5 H(+)(out). Produces ATP from ADP in the presence of a proton gradient across the membrane. The alpha chain is a regulatory subunit. The chain is ATP synthase subunit alpha, chloroplastic from Chlorella vulgaris (Green alga).